Here is a 281-residue protein sequence, read N- to C-terminus: Undecaprenyl-diphosphatase (281 aa).

6 helical membrane passes run 90-110 (WLVTLGTIPIGVLGLLFQDSI), 113-133 (VLRGFVVIGTTLWLFALVLGA), 147-167 (LSWKHGLLFGLAQALALIPGV), 191-211 (SFLLAIPAVVLSGFYQLYDEL), 217-237 (IAWVPTAVATVVAFVVGYAVI), and 257-277 (IAAAVVVYALVLAGALPAFQG).

It belongs to the UppP family.

The protein resides in the cell membrane. It catalyses the reaction di-trans,octa-cis-undecaprenyl diphosphate + H2O = di-trans,octa-cis-undecaprenyl phosphate + phosphate + H(+). Its function is as follows. Catalyzes the dephosphorylation of undecaprenyl diphosphate (UPP). Confers resistance to bacitracin. This Kineococcus radiotolerans (strain ATCC BAA-149 / DSM 14245 / SRS30216) protein is Undecaprenyl-diphosphatase.